The primary structure comprises 252 residues: uncharacterized protein (252 aa).

Belongs to the GSP E family.

This is an uncharacterized protein from Methanocaldococcus jannaschii (strain ATCC 43067 / DSM 2661 / JAL-1 / JCM 10045 / NBRC 100440) (Methanococcus jannaschii).